A 380-amino-acid polypeptide reads, in one-letter code: O-phospho-L-seryl-tRNA:Cys-tRNA synthase (380 aa).

Residues alanine 86–arginine 87, asparagine 192, and serine 215–histidine 217 contribute to the pyridoxal 5'-phosphate site. The residue at position 218 (lysine 218) is an N6-(pyridoxal phosphate)lysine.

Belongs to the SepCysS family. As to quaternary structure, homodimer. Interacts with SepRS. It depends on pyridoxal 5'-phosphate as a cofactor.

The catalysed reaction is O-phospho-L-seryl-tRNA(Cys) + hydrogen sulfide + H(+) = L-cysteinyl-tRNA(Cys) + phosphate. In terms of biological role, converts O-phospho-L-seryl-tRNA(Cys) (Sep-tRNA(Cys)) to L-cysteinyl-tRNA(Cys) (Cys-tRNA(Cys)). The polypeptide is O-phospho-L-seryl-tRNA:Cys-tRNA synthase (Methanococcus maripaludis (strain C6 / ATCC BAA-1332)).